Reading from the N-terminus, the 567-residue chain is Urease subunit alpha 1 (567 aa).

The 440-residue stretch at 128 to 567 (GAVDTHVHYI…LPLAQLYHLF (440 aa)) folds into the Urease domain. 3 residues coordinate Ni(2+): His-133, His-135, and Lys-216. Lys-216 carries the post-translational modification N6-carboxylysine. Position 218 (His-218) interacts with substrate. Ni(2+) is bound by residues His-245 and His-271. Residue His-319 is the Proton donor of the active site. Residue Asp-359 coordinates Ni(2+).

The protein belongs to the metallo-dependent hydrolases superfamily. Urease alpha subunit family. As to quaternary structure, heterotrimer of UreA (gamma), UreB (beta) and UreC (alpha) subunits. Three heterotrimers associate to form the active enzyme. The cofactor is Ni cation. Carboxylation allows a single lysine to coordinate two nickel ions.

Its subcellular location is the cytoplasm. The catalysed reaction is urea + 2 H2O + H(+) = hydrogencarbonate + 2 NH4(+). The protein operates within nitrogen metabolism; urea degradation; CO(2) and NH(3) from urea (urease route): step 1/1. This Psychrobacter cryohalolentis (strain ATCC BAA-1226 / DSM 17306 / VKM B-2378 / K5) protein is Urease subunit alpha 1.